We begin with the raw amino-acid sequence, 355 residues long: 3-dehydroquinate synthase (355 aa).

Residues 71–76, 105–109, 129–130, lysine 142, and lysine 151 contribute to the NAD(+) site; these read EGEASK, GVVGD, and TS. Positions 184, 246, and 263 each coordinate Zn(2+).

The protein belongs to the sugar phosphate cyclases superfamily. Dehydroquinate synthase family. Co(2+) is required as a cofactor. The cofactor is Zn(2+). It depends on NAD(+) as a cofactor.

The protein resides in the cytoplasm. It carries out the reaction 7-phospho-2-dehydro-3-deoxy-D-arabino-heptonate = 3-dehydroquinate + phosphate. Its pathway is metabolic intermediate biosynthesis; chorismate biosynthesis; chorismate from D-erythrose 4-phosphate and phosphoenolpyruvate: step 2/7. Catalyzes the conversion of 3-deoxy-D-arabino-heptulosonate 7-phosphate (DAHP) to dehydroquinate (DHQ). In Streptococcus gordonii (strain Challis / ATCC 35105 / BCRC 15272 / CH1 / DL1 / V288), this protein is 3-dehydroquinate synthase.